Reading from the N-terminus, the 305-residue chain is MNFQEIILALNQFWGEQGCIIQQPYDVEKGAGTMNPATFLRALGPEPWNVAYVEPSRRPTDGRYGENPNRLQHYYQYQVILKPSPDDVLEMYLDSLRRLGIDPLKHDIRFVEDNWESPTLGAWGLGWEVWLDGMEVTQFTYFQQCGGIDCRPVCAEITYGIERIAMFIQQKDSVYDIEWVEGITYGDVHHQGEVDYSHYNFEVADTAALFTFFDMYEKEALRVIEKGLVQPAYDYVLKCSHTFNLLDARGAISVTERTSFITRVRHLARVCAQAYVKQRERLRYPLIKDPAQRQRLGLDRENTGE.

This sequence belongs to the class-II aminoacyl-tRNA synthetase family. In terms of assembly, tetramer of two alpha and two beta subunits.

It localises to the cytoplasm. It catalyses the reaction tRNA(Gly) + glycine + ATP = glycyl-tRNA(Gly) + AMP + diphosphate. This Heliobacterium modesticaldum (strain ATCC 51547 / Ice1) protein is Glycine--tRNA ligase alpha subunit.